Here is a 472-residue protein sequence, read N- to C-terminus: MALNLTSSRRALGSLKPLTRAAFSGVRGYATAEPDLKATLREAIPAKRELLKKVKAHSNKVLGEVKVENTLGGMRGLKAMVWEGSVLDANEGIRFHGRTIKDCQKELPKGKTGTEMLPEAMFWLLLTGQVPSVNQVRTFSRELAEKAQIPEFISKMLDNFPKDLHPMTQFAMAVSALNYESKFAKAYEQGLNKADYWEPTFDDCISLLAKLPTIAAKIYQNAYRGGGALPAEVDLEQDWSYNFAAMLGKGGKENENFQDLLRLYLALHGDHEGGNVSAHATHLVGSALSDPFLSYSAGLQGLAGPLHGLAAQEVLRWIIQMKEAIPANYTEQDVNDYLWSTLNSGRVVPGYGHAVLRKPDPRFEALMDYAAARPEIANDPVFQLVEKNSRIAPEVLKKHGKTKNPYPNVDSSSGVLFHHYGFHETLYYTATFGVSRGLGPLAQLIWDRALGLPIERPKSINLEGILKQVEGQ.

The N-terminal 29 residues, 1–29, are a transit peptide targeting the mitochondrion; the sequence is MALNLTSSRRALGSLKPLTRAAFSGVRGY. The CoA site is built by R75 and K193. Oxaloacetate is bound at residue H271. Residue L306 coordinates CoA. H307 is a catalytic residue. Residues V348, G350, and Y351 each coordinate CoA. 2 residues coordinate oxaloacetate: H353 and R362. Residue H353 is part of the active site. Positions 402, 403, and 408 each coordinate CoA. The active site involves D410. Oxaloacetate-binding residues include R436 and R456.

It belongs to the citrate synthase family. As to quaternary structure, homodimer.

Its subcellular location is the mitochondrion matrix. The enzyme catalyses propanoyl-CoA + oxaloacetate + H2O = (2S,3S)-2-methylcitrate + CoA + H(+). It catalyses the reaction oxaloacetate + acetyl-CoA + H2O = citrate + CoA + H(+). Its pathway is organic acid metabolism; propanoate degradation. Functionally, component of the methylcitrate cycle that catalyzes the synthesis of (2S,3S)-2-methylcitrate from propionyl-CoA and oxaloacetate. Plays an important role in detoxification of propionyl-CoA, an inhibitor of both primary and secondary metabolism. Also has citrate synthase activity using as substrates acetyl-CoA and oxaloacetate. This chain is 2-methylcitrate synthase, mitochondrial, found in Gibberella moniliformis (Maize ear and stalk rot fungus).